Here is an 844-residue protein sequence, read N- to C-terminus: Proto-oncogene vav (844 aa).

One can recognise a Calponin-homology (CH) domain in the interval 1 to 119; sequence MELWRQCTHW…YTLSALSWTP (119 aa). Residues 193-372 enclose the DH domain; it reads KRCCCLREIQ…RDLAQCVNEV (180 aa). The PH domain occupies 401–503; that stretch reads RPKIDGELKI…WMEQFEMAIS (103 aa). The segment at 514 to 563 adopts a Phorbol-ester/DAG-type zinc-finger fold; the sequence is GHDFQMFSFEETTSCKACQMLLRGTFYQGYRCQRCRAPAHKECLGRVPPC. Residues 567-589 are disordered; that stretch reads GQDYSGTMKKDKPHRRAQDKKRN. Residues 591–659 enclose the SH3 1 domain; sequence LGLPKMEVCQ…PCNRVKPYVH (69 aa). The SH2 domain maps to 670-764; it reads WYAGPMERAG…SLDTTLQFPF (95 aa). One can recognise an SH3 2 domain in the interval 781–841; the sequence is KIFGTAKARY…PSNYVEEDYS (61 aa). Tyr825 and Tyr843 each carry phosphotyrosine.

Interacts with SHB. Interacts with APS, DOCK2, GRB2, GRB3, DOCK2, SLA, TEC and ZNF655/VIK. Interacts with SIAH2; without leading to its degradation. Associates with BLNK, PLCG1, GRB2 and NCK1 in a B-cell antigen receptor-dependent fashion. Interacts with CBLB; which inhibits tyrosine phosphorylation and down-regulates activity. May interact with CCPG1. Interacts with CLNK. Interacts with THEMIS2. Interacts with NEK3 and this interaction is prolactin-dependent. Interacts with ITK. Interacts with PTK2B/PYK2. Interacts with HCK. Interacts with PTK2B/PYK2. Interacts (via SH2 domain) with SYK. Interacts with ANKRD54. Interacts with CD6. Interacts with LCP2; this interaction plays a role in TCR-mediated cytokine production. Phosphorylated by FYN. Phosphorylated on tyrosine residues by HCK in response to IFNG and bacterial lipopolysaccharide (LPS).

Its function is as follows. Couples tyrosine kinase signals with the activation of the Rho/Rac GTPases, thus leading to cell differentiation and/or proliferation. This is Proto-oncogene vav (VAV1) from Bos taurus (Bovine).